The following is a 419-amino-acid chain: Zinc metalloproteinase-disintegrin-like atrolysin-A (419 aa).

The Peptidase M12B domain occupies 6–202 (RYVELVIVAD…YNPQCILNEP (197 aa)). E9 lines the Ca(2+) pocket. N-linked (GlcNAc...) asparagine glycosylation occurs at N72. D93 contacts Ca(2+). 3 cysteine pairs are disulfide-bonded: C117–C197, C157–C181, and C159–C164. Zn(2+) is bound at residue H142. E143 is a catalytic residue. H146 and H152 together coordinate Zn(2+). 8 residues coordinate Ca(2+): C197, N200, V212, N215, L217, E219, E222, and D225. The region spanning 210–296 (PPVCGNELLE…DCPTDDFHRN (87 aa)) is the Disintegrin domain. 14 disulfides stabilise this stretch: C213–C242, C224–C237, C226–C232, C236–C259, C250–C256, C255–C281, C268–C288, C275–C307, C300–C312, C319–C369, C334–C376, C347–C357, C364–C398, and C392–C403. Positions 274–276 (ECD) match the D/ECD-tripeptide motif. N326, N338, and N342 each carry an N-linked (GlcNAc...) asparagine glycan.

Belongs to the venom metalloproteinase (M12B) family. P-III subfamily. P-IIIa sub-subfamily. In terms of assembly, monomer. Requires Zn(2+) as cofactor. In terms of tissue distribution, expressed by the venom gland.

Its subcellular location is the secreted. It catalyses the reaction Cleavage of 3-Asn-|-Gln-4, 5-His-|-Leu-6, 10-His-|-Leu-11, 14-Ala-|-Leu-15 and 16-Tyr-|-Leu-17 in insulin B chain. Removes C-terminal Leu from small peptides.. In terms of biological role, snake venom zinc metalloproteinase-disintegrin that causes hemorrhage by provoking the degradation of the sub-endothelial matrix proteins (fibronectin, laminin, type IV collagen, nidogen, and gelatins) and disturbances in platelet function. The recombinant cysteine-rich domain interacts with the alpha-2/beta-1 integrin (ITGA2/ITGB1) (collagen receptor), and inhibits the platelet aggregation induced by collagen. The sequence is that of Zinc metalloproteinase-disintegrin-like atrolysin-A from Crotalus atrox (Western diamondback rattlesnake).